A 516-amino-acid polypeptide reads, in one-letter code: Importin subunit alpha-B (516 aa).

A compositionally biased stretch (basic and acidic residues) spans 1–29 (MQRSKQETRKSQYKKSIDSDESRRKREEA). The segment at 1-54 (MQRSKQETRKSQYKKSIDSDESRRKREEASLSIRKNKREESLLKKRTQAVPGST) is disordered. In terms of domain architecture, IBB spans 1 to 55 (MQRSKQETRKSQYKKSIDSDESRRKREEASLSIRKNKREESLLKKRTQAVPGSTP). ARM repeat units lie at residues 55–96 (PVKV…KLLS), 100–140 (SPPI…NIAS), 143–182 (PEQT…NIAG), 185–227 (HYCR…NFCR), 229–268 (KPQP…YLSD), 271–310 (NERI…NIVT), 313–352 (DNQT…NITA), 355–394 (KNQI…NATS), and 398–437 (PQQI…NILV). The interval 490–516 (EQEDEGDLMPEGSSFSFSNQTNSNFNL) is disordered. Low complexity predominate over residues 502-516 (SSFSFSNQTNSNFNL).

This sequence belongs to the importin alpha family. Forms a complex with tnpo/importin subunit beta.

It is found in the cytoplasm. It localises to the nucleus envelope. Functions in nuclear protein import via a substrate-importin alpha-beta transport complex that passes though the nuclear pore complexes (NPC). Binds specifically and directly to substrates containing either a simple or bipartite NLS motif. This chain is Importin subunit alpha-B, found in Dictyostelium discoideum (Social amoeba).